The sequence spans 811 residues: Elongation factor G, mitochondrial (811 aa).

A mitochondrion-targeting transit peptide spans 1-64; sequence MSAIARAAAR…FQQSFQRRWA (64 aa). The 299-residue stretch at 96-394 folds into the tr-type G domain; sequence RRQRNVGISA…GVCAYLPNPS (299 aa). GTP is bound by residues 105-112, 192-196, and 246-249; these read AHIDSGKT, DTPGH, and NKMD.

Belongs to the TRAFAC class translation factor GTPase superfamily. Classic translation factor GTPase family. EF-G/EF-2 subfamily.

The protein resides in the mitochondrion. The protein operates within protein biosynthesis; polypeptide chain elongation. Functionally, mitochondrial GTPase that catalyzes the GTP-dependent ribosomal translocation step during translation elongation. During this step, the ribosome changes from the pre-translocational (PRE) to the post-translocational (POST) state as the newly formed A-site-bound peptidyl-tRNA and P-site-bound deacylated tRNA move to the P and E sites, respectively. Catalyzes the coordinated movement of the two tRNA molecules, the mRNA and conformational changes in the ribosome. This Cryptococcus neoformans var. neoformans serotype D (strain JEC21 / ATCC MYA-565) (Filobasidiella neoformans) protein is Elongation factor G, mitochondrial.